We begin with the raw amino-acid sequence, 514 residues long: 2-isopropylmalate synthase (514 aa).

The region spanning 8-270 (IRIFDTTLRD…DCGVVTEQLF (263 aa)) is the Pyruvate carboxyltransferase domain. 4 residues coordinate Mn(2+): Asp-17, His-205, His-207, and Asn-241. Residues 394 to 514 (RLVNLSVQCS…KEEEQEKEGI (121 aa)) form a regulatory domain region.

The protein belongs to the alpha-IPM synthase/homocitrate synthase family. LeuA type 1 subfamily. As to quaternary structure, homodimer. Requires Mn(2+) as cofactor.

The protein localises to the cytoplasm. It carries out the reaction 3-methyl-2-oxobutanoate + acetyl-CoA + H2O = (2S)-2-isopropylmalate + CoA + H(+). It participates in amino-acid biosynthesis; L-leucine biosynthesis; L-leucine from 3-methyl-2-oxobutanoate: step 1/4. Functionally, catalyzes the condensation of the acetyl group of acetyl-CoA with 3-methyl-2-oxobutanoate (2-ketoisovalerate) to form 3-carboxy-3-hydroxy-4-methylpentanoate (2-isopropylmalate). The sequence is that of 2-isopropylmalate synthase from Nitratidesulfovibrio vulgaris (strain DSM 19637 / Miyazaki F) (Desulfovibrio vulgaris).